Consider the following 618-residue polypeptide: uncharacterized protein (618 aa).

It to Rhizobium NGR234A y4qD.

This is an uncharacterized protein from Sinorhizobium fredii (strain NBRC 101917 / NGR234).